The following is a 199-amino-acid chain: Ribosome maturation factor RimM (199 aa).

A PRC barrel domain is found at 95–168 (EDEFYHADLV…FVRVDPVAAG (74 aa)). Positions 167–199 (AGLVEDEDGDAPREEDFDPKGRPRGPRDAGGNR) are disordered. The span at 176-193 (DAPREEDFDPKGRPRGPR) shows a compositional bias: basic and acidic residues.

The protein belongs to the RimM family. Binds ribosomal protein uS19.

It is found in the cytoplasm. Its function is as follows. An accessory protein needed during the final step in the assembly of 30S ribosomal subunit, possibly for assembly of the head region. Essential for efficient processing of 16S rRNA. May be needed both before and after RbfA during the maturation of 16S rRNA. It has affinity for free ribosomal 30S subunits but not for 70S ribosomes. The polypeptide is Ribosome maturation factor RimM (Mesorhizobium japonicum (strain LMG 29417 / CECT 9101 / MAFF 303099) (Mesorhizobium loti (strain MAFF 303099))).